Reading from the N-terminus, the 312-residue chain is Pyridoxal kinase (312 aa).

N-acetylmethionine is present on Met1. The pyridoxal site is built by Ser12 and Thr47. Thr47 provides a ligand contact to pyridoxal 5'-phosphate. Ser59 carries the phosphoserine modification. Residue Asp113 participates in ATP binding. Position 113 (Asp113) interacts with Na(+). Residue Asp118 coordinates Mg(2+). Thr148 contacts Na(+). 150–153 is a binding site for ATP; that stretch reads NQFE. At Ser164 the chain carries Phosphoserine. Thr186 contacts Na(+). 186-187 lines the ATP pocket; sequence TS. Ser213 carries the phosphoserine modification. ATP-binding positions include 226–228 and Thr233; that span reads VEA. 234–235 provides a ligand contact to pyridoxal 5'-phosphate; that stretch reads GD. Asp235 serves as the catalytic Proton acceptor. At Ser285 the chain carries Phosphoserine.

It belongs to the pyridoxine kinase family. Homodimer. The cofactor is Zn(2+). Mg(2+) serves as cofactor.

Its subcellular location is the cytoplasm. The protein resides in the cytosol. The catalysed reaction is pyridoxal + ATP = pyridoxal 5'-phosphate + ADP + H(+). It carries out the reaction pyridoxamine + ATP = pyridoxamine 5'-phosphate + ADP + H(+). It catalyses the reaction pyridoxine + ATP = pyridoxine 5'-phosphate + ADP + H(+). The protein operates within cofactor metabolism; pyridoxal 5'-phosphate salvage; pyridoxal 5'-phosphate from pyridoxal: step 1/1. Its pathway is cofactor metabolism; pyridoxal 5'-phosphate salvage; pyridoxine 5'-phosphate from pyridoxine: step 1/1. It participates in cofactor metabolism; pyridoxal 5'-phosphate salvage; pyridoxamine 5'-phosphate from pyridoxamine: step 1/1. Its activity is regulated as follows. Activity is increased in the presence of K(+)or Na(+). In terms of biological role, catalyzes the phosphorylation of the dietary vitamin B6 vitamers pyridoxal (PL), pyridoxine (PN) and pyridoxamine (PM) to form pyridoxal 5'-phosphate (PLP), pyridoxine 5'-phosphate (PNP) and pyridoxamine 5'-phosphate (PMP), respectively. PLP is the active form of vitamin B6, and acts as a cofactor for over 140 different enzymatic reactions. The chain is Pyridoxal kinase from Mus musculus (Mouse).